A 761-amino-acid polypeptide reads, in one-letter code: ARF GTPase-activating protein GIT1 (761 aa).

In terms of domain architecture, Arf-GAP spans 1–124 (MSRKGPRAEV…AFVHKLPCRD (124 aa)). Residues 1–124 (MSRKGPRAEV…AFVHKLPCRD (124 aa)) form an interaction with gamma-tubulin and localization to the centrosome region. The C4-type zinc finger occupies 11 to 34 (CADCSAPDPGWASISRGVLVCDEC). ANK repeat units lie at residues 132 to 161 (DLSK…QANF), 166 to 195 (KGTT…DPGS), and 199 to 228 (NGRT…ELTD). Y224 bears the Phosphotyrosine mark. The interval 245–365 (HYIIPQMADS…QGKSLSSPTD (121 aa)) is interaction with PCLO. Positions 253–415 (DSLDLSELAK…NRARSMDSSD (163 aa)) are interaction with PTK2/FAK1. Residues 254–367 (SLDLSELAKA…KSLSSPTDNL (114 aa)) are interaction with ARHGEF7. The disordered stretch occupies residues 354–416 (RQQGKSLSSP…RARSMDSSDL (63 aa)). Positions 357–374 (GKSLSSPTDNLELSLRSQ) are enriched in polar residues. S359 and S362 each carry phosphoserine. At T364 the chain carries Phosphothreonine. The interaction with NCK2 and GRIN3A stretch occupies residues 366–587 (NLELSLRSQS…QEGSRHTSKL (222 aa)). The required for localization at synapses stretch occupies residues 366 to 587 (NLELSLRSQS…QEGSRHTSKL (222 aa)). S370 and S375 each carry phosphoserine. Y383 is modified (phosphotyrosine). Phosphoserine is present on residues S385 and S388. The span at 385 to 394 (SVASDEDTDQ) shows a compositional bias: acidic residues. T392 carries the post-translational modification Phosphothreonine. Phosphoserine is present on residues S410, S413, and S417. The tract at residues 411-466 (MDSSDLSDGAVTLQEYLELKKALATSEAKVQQLMKVNSSLSDELRRLQREIHKLQA) is interaction with MAPK1. An interaction with IKBKG region spans residues 420–620 (AVTLQEYLEL…EGKRFLELGK (201 aa)). Residues 440–474 (VQQLMKVNSSLSDELRRLQREIHKLQAENLQLRQP) adopt a coiled-coil conformation. Positions 471 to 501 (LRQPPGPVPTPPLPSERAEHTPMAPGGSTHR) are disordered. Residues 474–484 (PPGPVPTPPLP) show a composition bias toward pro residues. A Phosphothreonine modification is found at T480. S498 and S536 each carry phosphoserine. Residue T537 is modified to Phosphothreonine. Y545 and Y554 each carry phosphotyrosine. Residues S561, S571, S592, and S596 each carry the phosphoserine modification. Positions 572 to 606 (PLLSCSQEGSRHTSKLSRHGSGADSDYENTQSGDP) are disordered. T601 is modified (phosphothreonine). Residue S630 is modified to Phosphoserine. The interaction with PXN and TGFB1I1 stretch occupies residues 637-761 (PGLPSTEDVI…VTITTREKKQ (125 aa)).

As to quaternary structure, forms homodimers and possibly oligomers. May forms heterooligomers with GIT2. Interacts with G protein-coupled receptor kinases, including GRK2, GRK3, GRK5 and GRK6. Interacts with PPFIA1, PPFIA2 and PPFIA4. Interacts with GRIP1 and forms a ternary complex with PPFIA1 and GRIP1. Directly interacts with ARHGEF7/beta-PIX, forming in vitro a heptameric complex made of a GIT1 dimer and an ARHGEF7 trimer. Directly interacts with PXN/paxillin; this interaction is enhanced in the presence of ARHGEF7. Directly interacts (via C-terminus) with TGFB1I1/Hic-5 (via LD motif 3). Directly interacts with PTK2/FAK1. May interact with PTK2B/PYK2; this interaction may be indirect. Interacts with AMPA receptors GRIA2/3. Directly interacts with protein Piccolo/PCLO. Forms a complex with Ephrin-B1/EFNB1 and NCK2/GRB4 (via SH2); this interaction is important for spine morphogenesis and synapse formation. Interaction with NCK2 is transient and depends upon GIT1 phosphorylation at Tyr-383. Interacts with GRIN3A/GluN3A (via C-terminus); this interaction competes with GIT1 interaction with ARHGEF7 and limits synaptic localization of GIT1. Interacts with IKBKG/NEMO in resting bone mesenchymal stem cells, as well as in TNF-stimulated cells; this interaction may increase IKBKG affinity for 'Lys-63'-linked polyubiquitin chains. Interacts with GABA(A) receptors, including GABRB3 and GABRG2. Interacts with SCRIB. Interacts (via N- and C-terminus) with ENTR1/SDCCAG3 (via N-terminus); this interaction is direct. May form a tripartite complex with ENTR1 and PTPN13. Interacts with YWHAZ. Interacts with PAK1. Interacts with PAK3. Directly interacts (via N-terminus) with gamma-tubulin. Interacts with MAPK1 and MAPK3; this interaction is required for MAPK1/3 recruitment to focal adhesions. In terms of processing, phosphorylated by PAK1. Phosphorylation on tyrosine residues may be catalyzed by PTK2/FAK1 and SRC in growing fibroblasts. Phosphorylation at Tyr-383 is induced by activation of Ephrin-B1/EFNB1 and catalyzed by SRC family kinases. It is required for the interaction with NCK2 and for GIT1 recruitment to synapses in hippocampal neurons.

The protein resides in the cytoplasm. Its subcellular location is the synapse. The protein localises to the presynapse. It is found in the postsynapse. It localises to the postsynaptic density. The protein resides in the cell junction. Its subcellular location is the focal adhesion. The protein localises to the cell projection. It is found in the lamellipodium. It localises to the cytoskeleton. The protein resides in the microtubule organizing center. Its subcellular location is the centrosome. The protein localises to the spindle pole. Its function is as follows. GTPase-activating protein for ADP ribosylation factor family members, including ARF1. Multidomain scaffold protein that interacts with numerous proteins and therefore participates in many cellular functions, including receptor internalization, focal adhesion remodeling, and signaling by both G protein-coupled receptors and tyrosine kinase receptors. Through PAK1 activation, positively regulates microtubule nucleation during interphase. Plays a role in the regulation of cytokinesis; for this function, may act in a pathway also involving ENTR1 and PTPN13. May promote cell motility both by regulating focal complex dynamics and by local activation of RAC1. May act as scaffold for MAPK1/3 signal transduction in focal adhesions. Recruits MAPK1/3/ERK1/2 to focal adhesions after EGF stimulation via a Src-dependent pathway, hence stimulating cell migration. Plays a role in brain development and function. Involved in the regulation of spine density and synaptic plasticity that is required for processes involved in learning. Plays an important role in dendritic spine morphogenesis and synapse formation. In hippocampal neurons, recruits guanine nucleotide exchange factors (GEFs), such as ARHGEF7/beta-PIX, to the synaptic membrane. These in turn locally activate RAC1, which is an essential step for spine morphogenesis and synapse formation. May contribute to the organization of presynaptic active zones through oligomerization and formation of a Piccolo/PCLO-based protein network, which includes ARHGEF7/beta-PIX and FAK1. In neurons, through its interaction with liprin-alpha family members, may be required for AMPA receptor (GRIA2/3) proper targeting to the cell membrane. In complex with GABA(A) receptors and ARHGEF7, plays a crucial role in regulating GABA(A) receptor synaptic stability, maintaining GPHN/gephyrin scaffolds and hence GABAergic inhibitory synaptic transmission, by locally coordinating RAC1 and PAK1 downstream effector activity, leading to F-actin stabilization. May also be important for RAC1 downstream signaling pathway through PAK3 and regulation of neuronal inhibitory transmission at presynaptic input. Required for successful bone regeneration during fracture healing. The function in intramembranous ossification may, at least partly, exerted by macrophages in which GIT1 is a key negative regulator of redox homeostasis, IL1B production, and glycolysis, acting through the ERK1/2/NRF2/NFE2L2 axis. May play a role in angiogenesis during fracture healing. In this process, may regulate activation of the canonical NF-kappa-B signal in bone mesenchymal stem cells by enhancing the interaction between NEMO and 'Lys-63'-ubiquitinated RIPK1/RIP1, eventually leading to enhanced production of VEGFA and others angiogenic factors. Essential for VEGF signaling through the activation of phospholipase C-gamma and ERK1/2, hence may control endothelial cell proliferation and angiogenesis. The sequence is that of ARF GTPase-activating protein GIT1 (GIT1) from Homo sapiens (Human).